We begin with the raw amino-acid sequence, 204 residues long: Small ribosomal subunit protein uS4 (204 aa).

The region spanning 93–156 (SRLSSVLYHS…AKIPVIVEAV (64 aa)) is the S4 RNA-binding domain.

The protein belongs to the universal ribosomal protein uS4 family. As to quaternary structure, part of the 30S ribosomal subunit. Contacts protein S5. The interaction surface between S4 and S5 is involved in control of translational fidelity.

Its function is as follows. One of the primary rRNA binding proteins, it binds directly to 16S rRNA where it nucleates assembly of the body of the 30S subunit. Functionally, with S5 and S12 plays an important role in translational accuracy. This is Small ribosomal subunit protein uS4 from Wolbachia sp. subsp. Brugia malayi (strain TRS).